Reading from the N-terminus, the 198-residue chain is Transcription factor elt-7 (198 aa).

Polar residues predominate over residues 1-18 (MLPETTTLQPLPSVTTIM). Residues 1–20 (MLPETTTLQPLPSVTTIMNE) form a disordered region. A GATA-type zinc finger spans residues 143–167 (CSHCSTTTTTLWRKNDEGNLECNAC).

Its subcellular location is the nucleus. Transcriptional activator that binds to the consensus sequence 5'-[AT]GATA[AG]-3'. Required for gut-specific differentiation, specifically acting with the GATA region-binding transcription factor elt-2 to control normal gene expression and promote normal formation of the intestine. May have a protective role in response to infection by Gram-negative bacteria such as P.aeruginosa. The sequence is that of Transcription factor elt-7 from Caenorhabditis elegans.